A 1397-amino-acid chain; its full sequence is Protein RhsC (1397 aa).

Tandem repeats lie at residues N330–T352, G353–A374, G375–D417, G418–A438, G439–D460, G461–D481, G482–D502, G503–T525, G526–S546, G547–E567, G568–Q588, G589–D609, G610–G629, G630–N650, G651–D671, G672–E691, G692–N711, G712–E734, G735–H758, G808–F828, G829–S850, L851–P871, R872–N894, L895–A930, R931–T959, D960–A984, E985–S1019, and G1162–Q1186. The tract at residues N330–Q1186 is 28 X approximate tandem repeats. The interval G1292–S1312 is disordered.

The protein belongs to the RHS family.

Rhs elements have a nonessential function. They may play an important role in the natural ecology of the cell. This chain is Protein RhsC (rhsC), found in Escherichia coli (strain K12).